A 273-amino-acid polypeptide reads, in one-letter code: Tyrosinase (273 aa).

The first 18 residues, 1–18, serve as a signal peptide directing secretion; sequence MCLLALGFLLGILQPASG. Asn-86 and Asn-169 each carry an N-linked (GlcNAc...) asparagine glycan. Positions 180, 202, and 211 each coordinate Cu cation. Asn-230 carries an N-linked (GlcNAc...) asparagine glycan.

The protein belongs to the tyrosinase family. It depends on Cu(2+) as a cofactor.

Its subcellular location is the melanosome membrane. It carries out the reaction 2 L-dopa + O2 = 2 L-dopaquinone + 2 H2O. The catalysed reaction is L-tyrosine + O2 = L-dopaquinone + H2O. This is a copper-containing oxidase that functions in the formation of pigments such as melanins and other polyphenolic compounds. The sequence is that of Tyrosinase (TYR) from Pelodiscus sinensis (Chinese softshell turtle).